Here is a 374-residue protein sequence, read N- to C-terminus: Chaperone protein DnaJ (374 aa).

A J domain is found at 5-70 (DYYEILGVSR…QKRAAYDQYG (66 aa)). Residues 129-207 (GVTREIRIPT…CHGHGRVEKS (79 aa)) form a CR-type zinc finger. Residues Cys-142, Cys-145, Cys-159, Cys-162, Cys-181, Cys-184, Cys-195, and Cys-198 each contribute to the Zn(2+) site. CXXCXGXG motif repeat units lie at residues 142 to 149 (CDVCHGSG), 159 to 166 (CPTCHGQG), 181 to 188 (CPTCQGQG), and 195 to 202 (CTKCHGHG).

Belongs to the DnaJ family. As to quaternary structure, homodimer. It depends on Zn(2+) as a cofactor.

It is found in the cytoplasm. Its function is as follows. Participates actively in the response to hyperosmotic and heat shock by preventing the aggregation of stress-denatured proteins and by disaggregating proteins, also in an autonomous, DnaK-independent fashion. Unfolded proteins bind initially to DnaJ; upon interaction with the DnaJ-bound protein, DnaK hydrolyzes its bound ATP, resulting in the formation of a stable complex. GrpE releases ADP from DnaK; ATP binding to DnaK triggers the release of the substrate protein, thus completing the reaction cycle. Several rounds of ATP-dependent interactions between DnaJ, DnaK and GrpE are required for fully efficient folding. Also involved, together with DnaK and GrpE, in the DNA replication of plasmids through activation of initiation proteins. This chain is Chaperone protein DnaJ, found in Sodalis glossinidius (strain morsitans).